The primary structure comprises 259 residues: Pimeloyl-[acyl-carrier protein] methyl ester esterase (259 aa).

The region spanning Phe-16–His-241 is the AB hydrolase-1 domain. Substrate contacts are provided by residues Trp-22, Ser-82–Met-83, and Phe-143–Gln-147. The active-site Nucleophile is the Ser-82. Residues Asp-207 and His-235 contribute to the active site. His-235 provides a ligand contact to substrate.

Belongs to the AB hydrolase superfamily. Carboxylesterase BioH family. Monomer.

The protein localises to the cytoplasm. The enzyme catalyses 6-carboxyhexanoyl-[ACP] methyl ester + H2O = 6-carboxyhexanoyl-[ACP] + methanol + H(+). Its pathway is cofactor biosynthesis; biotin biosynthesis. In terms of biological role, the physiological role of BioH is to remove the methyl group introduced by BioC when the pimeloyl moiety is complete. It allows to synthesize pimeloyl-ACP via the fatty acid synthetic pathway through the hydrolysis of the ester bonds of pimeloyl-ACP esters. This chain is Pimeloyl-[acyl-carrier protein] methyl ester esterase, found in Hamiltonella defensa subsp. Acyrthosiphon pisum (strain 5AT).